A 296-amino-acid chain; its full sequence is ATP synthase gamma chain (296 aa).

This sequence belongs to the ATPase gamma chain family. In terms of assembly, F-type ATPases have 2 components, CF(1) - the catalytic core - and CF(0) - the membrane proton channel. CF(1) has five subunits: alpha(3), beta(3), gamma(1), delta(1), epsilon(1). CF(0) has three main subunits: a, b and c.

It localises to the cell inner membrane. In terms of biological role, produces ATP from ADP in the presence of a proton gradient across the membrane. The gamma chain is believed to be important in regulating ATPase activity and the flow of protons through the CF(0) complex. This chain is ATP synthase gamma chain, found in Methylorubrum extorquens (strain PA1) (Methylobacterium extorquens).